We begin with the raw amino-acid sequence, 406 residues long: Vacuole membrane protein 1 (406 aa).

Residues 1 to 20 (MAENGKNCDQRRVAMNKEQH) are compositionally biased toward basic and acidic residues. The tract at residues 1–36 (MAENGKNCDQRRVAMNKEQHNGNFTDPSSVNEKKRR) is disordered. At A2 the chain carries N-acetylalanine. Residues 2 to 43 (AENGKNCDQRRVAMNKEQHNGNFTDPSSVNEKKRREREERQN) are Cytoplasmic-facing. Residues 21–30 (NGNFTDPSSV) are compositionally biased toward polar residues. The chain crosses the membrane as a helical span at residues 44–64 (IVLWRQPLITLQYFSLEILVI). The Extracellular segment spans residues 65-77 (LKEWTSKLWHRQS). Residues 78–98 (IVVSFLLLLAVLIATYYVEGA) traverse the membrane as a helical segment. The Cytoplasmic portion of the chain corresponds to 99–109 (HQQYVQRIEKQ). A helical membrane pass occupies residues 110-130 (FLLYAYWIGLGILSSVGLGTG). The Extracellular portion of the chain corresponds to 131-250 (LHTFLLYLGP…ASRAKLAVQK (120 aa)). Residues 173–316 (GTEGTISLWS…FVIITFSKHI (144 aa)) are VTT domain. Residues 251–271 (LVQKVGFFGILACASIPNPLF) form a helical membrane-spanning segment. Topologically, residues 272–273 (DL) are cytoplasmic. The helical transmembrane segment at 274–294 (AGITCGHFLVPFWTFFGATLI) threads the bilayer. The Extracellular portion of the chain corresponds to 295–305 (GKAIIKMHIQK). The helical transmembrane segment at 306–326 (IFVIITFSKHIVEQMVAFIGA) threads the bilayer. Over 327 to 363 (VPGIGPSLQKPFQEYLEAQRQKLHHKSEMGTPQGENW) the chain is Cytoplasmic. The helical transmembrane segment at 364–384 (LSWMFEKLVVVMVCYFILSII) threads the bilayer. Residues 385-406 (NSMAQSYAKRIQQRLNSEEKTK) are Extracellular-facing.

It belongs to the VMP1 family. As to quaternary structure, interacts with BECN1. Interacts with TJP1. Interacts with TP53INP2. Interacts with TMEM41B. Interacts with ATP2A2, PLN and SLN; competes with PLN and SLN to prevent them from forming an inhibitory complex with ATP2A2. Interacts with ATG2A.

It is found in the endoplasmic reticulum-Golgi intermediate compartment membrane. It localises to the cell membrane. The protein resides in the vacuole membrane. Its subcellular location is the endoplasmic reticulum membrane. It carries out the reaction a 1,2-diacyl-sn-glycero-3-phospho-L-serine(in) = a 1,2-diacyl-sn-glycero-3-phospho-L-serine(out). The catalysed reaction is cholesterol(in) = cholesterol(out). It catalyses the reaction a 1,2-diacyl-sn-glycero-3-phosphocholine(in) = a 1,2-diacyl-sn-glycero-3-phosphocholine(out). The enzyme catalyses a 1,2-diacyl-sn-glycero-3-phosphoethanolamine(in) = a 1,2-diacyl-sn-glycero-3-phosphoethanolamine(out). In terms of biological role, phospholipid scramblase involved in lipid homeostasis and membrane dynamics processes. Has phospholipid scramblase activity toward cholesterol and phosphatidylserine, as well as phosphatidylethanolamine and phosphatidylcholine. Required for autophagosome formation: participates in early stages of autophagosome biogenesis at the endoplasmic reticulum (ER) membrane by reequilibrating the leaflets of the ER as lipids are extracted by ATG2 (ATG2A or ATG2B) to mediate autophagosome assembly. Regulates ATP2A2 activity to control ER-isolation membrane contacts for autophagosome formation. In addition to autophagy, involved in other processes in which phospholipid scramblase activity is required. Modulates ER contacts with lipid droplets, mitochondria and endosomes. Plays an essential role in formation of cell junctions. Upon stress such as bacterial and viral infection, promotes formation of cytoplasmic vacuoles followed by cell death. Involved in the cytoplasmic vacuolization of acinar cells during the early stage of acute pancreatitis. This is Vacuole membrane protein 1 from Pongo abelii (Sumatran orangutan).